Reading from the N-terminus, the 848-residue chain is Heat shock protein 70 homolog lhs1 (848 aa).

The N-terminal stretch at 1 to 21 (MKRSVLTIILFFSCQFWHAFA) is a signal peptide. N-linked (GlcNAc...) asparagine glycosylation is found at asparagine 134, asparagine 247, asparagine 359, asparagine 457, asparagine 462, asparagine 488, asparagine 555, asparagine 632, asparagine 678, asparagine 733, and asparagine 817. A disordered region spans residues 784–848 (KLKAKKGASS…QQEIDDSDEL (65 aa)). Composition is skewed to polar residues over residues 807–822 (TNDIEPTTALNSTSTQ) and 829–840 (ASVTQRPSSLQQ). The Prevents secretion from ER motif lies at 845–848 (SDEL).

The protein belongs to the heat shock protein 70 family.

Its subcellular location is the endoplasmic reticulum lumen. It catalyses the reaction ATP + H2O = ADP + phosphate + H(+). Its function is as follows. Chaperone required for protein translocation and folding in the endoplasmic reticulum. This is Heat shock protein 70 homolog lhs1 from Schizosaccharomyces pombe (strain 972 / ATCC 24843) (Fission yeast).